We begin with the raw amino-acid sequence, 212 residues long: Adenylate kinase (212 aa).

10 to 15 (GAGKGT) lines the ATP pocket. The NMP stretch occupies residues 30 to 59 (AIGDIFRTIIKTSTSEAELINNYVRQGELI). AMP-binding positions include R36, 57–59 (ELI), 85–88 (GYPR), and Q92. Positions 122 to 160 (GRYSCKNCGKIYNRYFLQPKTDNVCDVCGSSTFDYRKDD) are LID. R123 contacts ATP. Zn(2+)-binding residues include C126 and C129. 132 to 133 (IY) contributes to the ATP binding site. Zn(2+) contacts are provided by C146 and C149. AMP-binding residues include R157 and R168. K196 provides a ligand contact to ATP.

It belongs to the adenylate kinase family. As to quaternary structure, monomer.

The protein localises to the cytoplasm. The enzyme catalyses AMP + ATP = 2 ADP. Its pathway is purine metabolism; AMP biosynthesis via salvage pathway; AMP from ADP: step 1/1. Catalyzes the reversible transfer of the terminal phosphate group between ATP and AMP. Plays an important role in cellular energy homeostasis and in adenine nucleotide metabolism. This Rickettsia rickettsii (strain Iowa) protein is Adenylate kinase.